Consider the following 40-residue polypeptide: RapK inhibitor (40 aa).

2 consecutive propeptides follow at residues 1–34 (MKKLVLCVSILAVILSGVALTQLSTDSPSNIQVA) and G40.

It belongs to the Phr family. Contains a predicted signal peptide cleavage site in the N-terminal region, however the propeptide is probably only subject to processing events at the ends of the mature peptide.

The protein localises to the secreted. It localises to the cytoplasm. Signaling molecule involved in the regulation of genetic competence development. Secreted during production, but the mature peptide acts intracellularly, indicating that it needs to be imported into the cell to function. Stimulates expression of the genes controlled by ComA, a transcriptional factor that regulates the development of genetic competence. Acts by inhibiting RapK, which regulates the activity of ComA. In Bacillus subtilis (strain 168), this protein is RapK inhibitor (phrK).